Here is a 115-residue protein sequence, read N- to C-terminus: Nucleoid-associated protein LBL_0065 (115 aa).

The protein belongs to the YbaB/EbfC family. Homodimer.

The protein resides in the cytoplasm. The protein localises to the nucleoid. In terms of biological role, binds to DNA and alters its conformation. May be involved in regulation of gene expression, nucleoid organization and DNA protection. In Leptospira borgpetersenii serovar Hardjo-bovis (strain L550), this protein is Nucleoid-associated protein LBL_0065.